A 138-amino-acid chain; its full sequence is uncharacterized protein (138 aa).

The protein belongs to the IIV-3 015R family.

This is an uncharacterized protein from Simulium iridescent virus (IIV-22).